Here is a 169-residue protein sequence, read N- to C-terminus: Peptide methionine sulfoxide reductase MsrA 1 (169 aa).

Residue Cys-12 is part of the active site.

Belongs to the MsrA Met sulfoxide reductase family.

It catalyses the reaction L-methionyl-[protein] + [thioredoxin]-disulfide + H2O = L-methionyl-(S)-S-oxide-[protein] + [thioredoxin]-dithiol. The enzyme catalyses [thioredoxin]-disulfide + L-methionine + H2O = L-methionine (S)-S-oxide + [thioredoxin]-dithiol. In terms of biological role, has an important function as a repair enzyme for proteins that have been inactivated by oxidation. Catalyzes the reversible oxidation-reduction of methionine sulfoxide in proteins to methionine. This chain is Peptide methionine sulfoxide reductase MsrA 1 (msrA1), found in Staphylococcus aureus (strain Mu50 / ATCC 700699).